Consider the following 260-residue polypeptide: DNA repair protein RecO (260 aa).

A disordered region spans residues 239–260; the sequence is SAGVAAARKAGGDGSDGDEGEQ.

This sequence belongs to the RecO family.

In terms of biological role, involved in DNA repair and RecF pathway recombination. In Sodalis glossinidius (strain morsitans), this protein is DNA repair protein RecO.